A 130-amino-acid chain; its full sequence is Ribosome-binding factor A (130 aa).

Belongs to the RbfA family. In terms of assembly, monomer. Binds 30S ribosomal subunits, but not 50S ribosomal subunits or 70S ribosomes.

The protein resides in the cytoplasm. Its function is as follows. One of several proteins that assist in the late maturation steps of the functional core of the 30S ribosomal subunit. Associates with free 30S ribosomal subunits (but not with 30S subunits that are part of 70S ribosomes or polysomes). Required for efficient processing of 16S rRNA. May interact with the 5'-terminal helix region of 16S rRNA. This chain is Ribosome-binding factor A, found in Prochlorococcus marinus (strain MIT 9215).